A 242-amino-acid polypeptide reads, in one-letter code: Ribonuclease 3 (242 aa).

One can recognise an RNase III domain in the interval 14–142 (LRRFAARFAL…VIGALYLSTG (129 aa)). Glu56 serves as a coordination point for Mg(2+). Residue Asp60 is part of the active site. Asp128 and Glu131 together coordinate Mg(2+). Residue Glu131 is part of the active site. The DRBM domain occupies 170 to 235 (NHKSALQELT…ARGAYAALRS (66 aa)).

Belongs to the ribonuclease III family. In terms of assembly, homodimer. Mg(2+) serves as cofactor.

It localises to the cytoplasm. It catalyses the reaction Endonucleolytic cleavage to 5'-phosphomonoester.. Functionally, digests double-stranded RNA. Involved in the processing of primary rRNA transcript to yield the immediate precursors to the large and small rRNAs (23S and 16S). Processes some mRNAs, and tRNAs when they are encoded in the rRNA operon. Processes pre-crRNA and tracrRNA of type II CRISPR loci if present in the organism. This is Ribonuclease 3 from Gloeobacter violaceus (strain ATCC 29082 / PCC 7421).